Consider the following 237-residue polypeptide: Myb-related protein MYBAS1 (237 aa).

2 consecutive HTH myb-type domains span residues Arg-5–Leu-57 and His-58–Ala-112. The segment at residues Trp-33–Leu-57 is a DNA-binding region (H-T-H motif). Positions Lys-62–Arg-65 match the Bipartite nuclear localization signal 1 motif. Residues Trp-85 to Met-108 constitute a DNA-binding region (H-T-H motif). The Bipartite nuclear localization signal 2 motif lies at Arg-109 to Gly-117.

Its subcellular location is the nucleus. In terms of biological role, transcription factor. The chain is Myb-related protein MYBAS1 (MYBAS1) from Oryza sativa subsp. japonica (Rice).